We begin with the raw amino-acid sequence, 494 residues long: MPTESASCSTARQTKQKRKSHSLSIRRTNSSEQERTGLPRDMLEGQDSKLPSSVRSTLLELFGQIEREFENLYIENLELRREIDTLNERLAAEGQAIDGAELSKGQLKTKASHSTSQLSQKLKTTYKASTSKIVSSFKTTTSRAACQLVKEYIGHRDGIWDVSVAKTQPVVLGTASADHTALLWSIETGKCLVKYAGHVGSVNSIKFHPSEQLALTASGDQTAHIWRYAVQLPTPQPVADTSISGEDEVECSDKDEPDLDGDVSSDCPTIRVPLTSLKSHQGVVIASDWLVGGKQAVTASWDRTANLYDVETSELVHSLTGHDQELTHCCTHPTQRLVVTSSRDTTFRLWDFRDPSIHSVNVFQGHTDTVTSAVFTVGDNVVSGSDDRTVKVWDLKNMRSPIATIRTDSAINRINVCVGQKIIALPHDNRQVRLFDMSGVRLARLPRSSRQGHRRMVCCSAWSEDHPVCNLFTCGFDRQAIGWNINIPALLQEK.

Composition is skewed to polar residues over residues 1–13 (MPTE…TARQ) and 22–31 (SLSIRRTNSS). The tract at residues 1–50 (MPTESASCSTARQTKQKRKSHSLSIRRTNSSEQERTGLPRDMLEGQDSKL) is disordered. Residues 32-47 (EQERTGLPRDMLEGQD) are compositionally biased toward basic and acidic residues. WD repeat units follow at residues 154–194 (GHRD…CLVK) and 197–236 (GHVG…PTPQ). The tract at residues 237-265 (PVADTSISGEDEVECSDKDEPDLDGDVSS) is disordered. The span at 245–263 (GEDEVECSDKDEPDLDGDV) shows a compositional bias: acidic residues. WD repeat units lie at residues 279-318 (SHQG…LVHS), 321-360 (GHDQ…IHSV), 365-403 (GHTD…SPIA), 406-445 (RTDS…LARL), and 452-493 (GHRR…LLQE).

In terms of assembly, forms homodimers. Interacts with PACS1. Interacts with PACS2.

It is found in the cytoplasm. It localises to the nucleus. In terms of biological role, required for normal ER Ca2+ handling in lymphocytes. Together with PACS1, it plays an essential role in stabilizing peripheral lymphocyte populations. The chain is WD repeat-containing protein 37 (WDR37) from Homo sapiens (Human).